Here is a 252-residue protein sequence, read N- to C-terminus: uncharacterized protein (252 aa).

It belongs to the methyltransferase superfamily.

This is an uncharacterized protein from Mycobacterium sp. (strain KMS).